Consider the following 163-residue polypeptide: Ribonuclease P protein component (163 aa).

The segment at Met1–Asp68 is disordered. A compositionally biased stretch (polar residues) spans Thr8–Leu19.

This sequence belongs to the RnpA family. In terms of assembly, consists of a catalytic RNA component (M1 or rnpB) and a protein subunit.

It carries out the reaction Endonucleolytic cleavage of RNA, removing 5'-extranucleotides from tRNA precursor.. In terms of biological role, RNaseP catalyzes the removal of the 5'-leader sequence from pre-tRNA to produce the mature 5'-terminus. It can also cleave other RNA substrates such as 4.5S RNA. The protein component plays an auxiliary but essential role in vivo by binding to the 5'-leader sequence and broadening the substrate specificity of the ribozyme. This chain is Ribonuclease P protein component, found in Thermus thermophilus (strain ATCC BAA-163 / DSM 7039 / HB27).